Consider the following 66-residue polypeptide: U-limacoditoxin(59)-Dv128 (66 aa).

An N-terminal signal peptide occupies residues 1–20 (MRHLLVLLLICLSVIAMAQA). Residues 21–66 (TFGGGLGGAVGGRRRRDIGGGLGGAVGGRRRRDIGGGLGGAVGGKS) form a 3 X 16 AA tandem repeats of [FI]-G-G-G-L-G-G-A-V-G-G-R-R-R-R-D region. A run of 2 repeats spans residues 22 to 37 (FGGGLGGAVGGRRRRD) and 38 to 53 (IGGGLGGAVGGRRRRD). At glycine 31 the chain carries Glycine amide. Positions 33–37 (RRRRD) are excised as a propeptide. Glycine 47 is modified (glycine amide). Residues 49–53 (RRRRD) constitute a propeptide that is removed on maturation. Residues 54-64 (IGGGLGGAVGG) form a 3; half-length repeat.

The protein belongs to the limacoditoxin-59 family. In terms of tissue distribution, expressed by the venom secretory cell of the spine. The spine is a cuticular structure containing a single large nucleated venom-secreting cell at its base. It is an independent unit capable of producing, storing and injecting venom. On the back of D.vulnerans caterpillars, spines are grouped together by 50 to 100 to form scoli, of which there are eight in D.vulnerans.

The protein resides in the secreted. Its function is as follows. Probable toxin. This is U-limacoditoxin(59)-Dv128 from Doratifera vulnerans (Mottled cup moth).